We begin with the raw amino-acid sequence, 644 residues long: Chaperone protein DnaK (644 aa).

Residue T200 is modified to Phosphothreonine; by autocatalysis. The interval 603-644 (VMAAEQAKSGGAAPGAAPGGAQQAAPDADVVDADFKEVDDKK) is disordered. The segment covering 612–630 (GGAAPGAAPGGAQQAAPDA) has biased composition (low complexity). The segment covering 635 to 644 (ADFKEVDDKK) has biased composition (basic and acidic residues).

The protein belongs to the heat shock protein 70 family.

In terms of biological role, acts as a chaperone. The chain is Chaperone protein DnaK from Polynucleobacter asymbioticus (strain DSM 18221 / CIP 109841 / QLW-P1DMWA-1) (Polynucleobacter necessarius subsp. asymbioticus).